The primary structure comprises 455 residues: ATP-dependent protease ATPase subunit HslU (455 aa).

Residues valine 23, 65-70 (GVGKTE), aspartate 266, glutamate 333, and arginine 405 each bind ATP.

The protein belongs to the ClpX chaperone family. HslU subfamily. A double ring-shaped homohexamer of HslV is capped on each side by a ring-shaped HslU homohexamer. The assembly of the HslU/HslV complex is dependent on binding of ATP.

It localises to the cytoplasm. In terms of biological role, ATPase subunit of a proteasome-like degradation complex; this subunit has chaperone activity. The binding of ATP and its subsequent hydrolysis by HslU are essential for unfolding of protein substrates subsequently hydrolyzed by HslV. HslU recognizes the N-terminal part of its protein substrates and unfolds these before they are guided to HslV for hydrolysis. The chain is ATP-dependent protease ATPase subunit HslU from Xanthomonas euvesicatoria pv. vesicatoria (strain 85-10) (Xanthomonas campestris pv. vesicatoria).